Here is a 292-residue protein sequence, read N- to C-terminus: ATP synthase gamma chain (292 aa).

Belongs to the ATPase gamma chain family. In terms of assembly, F-type ATPases have 2 components, CF(1) - the catalytic core - and CF(0) - the membrane proton channel. CF(1) has five subunits: alpha(3), beta(3), gamma(1), delta(1), epsilon(1). CF(0) has three main subunits: a, b and c.

It is found in the cell membrane. In terms of biological role, produces ATP from ADP in the presence of a proton gradient across the membrane. The gamma chain is believed to be important in regulating ATPase activity and the flow of protons through the CF(0) complex. This Prosthecochloris aestuarii (strain DSM 271 / SK 413) protein is ATP synthase gamma chain.